The following is a 316-amino-acid chain: uncharacterized protein (316 aa).

The protein belongs to the chlamydial CPn_0441/CT_007/TC_0275 family.

This is an uncharacterized protein from Chlamydia pneumoniae (Chlamydophila pneumoniae).